The primary structure comprises 369 residues: Uroporphyrinogen decarboxylase (369 aa).

Substrate is bound by residues 36–40, Asp86, Tyr162, Ser217, and His342; that span reads RQAGR.

The protein belongs to the uroporphyrinogen decarboxylase family. Homodimer.

The protein resides in the cytoplasm. The catalysed reaction is uroporphyrinogen III + 4 H(+) = coproporphyrinogen III + 4 CO2. The protein operates within porphyrin-containing compound metabolism; protoporphyrin-IX biosynthesis; coproporphyrinogen-III from 5-aminolevulinate: step 4/4. Catalyzes the decarboxylation of four acetate groups of uroporphyrinogen-III to yield coproporphyrinogen-III. This chain is Uroporphyrinogen decarboxylase, found in Albidiferax ferrireducens (strain ATCC BAA-621 / DSM 15236 / T118) (Rhodoferax ferrireducens).